A 392-amino-acid chain; its full sequence is Autophagy-related protein 21 (392 aa).

WD repeat units lie at residues 200 to 240 (VHQS…NDEP) and 250 to 289 (SRPS…TEAD). The L/FRRG motif signature appears at 246–250 (FRRGS).

The protein belongs to the WD repeat PROPPIN family.

It is found in the cytoplasm. The protein resides in the membrane. The protein localises to the vacuole membrane. In terms of biological role, required for cytoplasm to vacuole transport (Cvt) vesicles formation and mitophagy. Involved in binding of phosphatidylethanolamine to ATG8 and in recruitment of ATG8 and ATG5 to the pre-autophagosomal structure. Protects ATG8 from ARG4-mediated cleavage. This Kluyveromyces lactis (strain ATCC 8585 / CBS 2359 / DSM 70799 / NBRC 1267 / NRRL Y-1140 / WM37) (Yeast) protein is Autophagy-related protein 21 (ATG21).